Consider the following 528-residue polypeptide: Probable GTP-binding protein OBGM, mitochondrial (528 aa).

Residues 1–45 (MWRRQHALLRRISLPKPPAATGIGCYYATEPEGRKPKTAPLQSRG) constitute a mitochondrion transit peptide. The Obg domain maps to 46–339 (MVDRFRLRAK…TYLILELKSI (294 aa)). Disordered stretches follow at residues 52 to 87 (LRAKGGDGGNGCISLRRSRSDRQGKPDGGNGGRGGD) and 167 to 212 (HSPF…NHRG). The span at 77–86 (PDGGNGGRGG) shows a compositional bias: gly residues. The segment covering 197–207 (NTAENDCERGN) has biased composition (basic and acidic residues). The OBG-type G domain maps to 340-513 (ADVGLVGMPN…LRVGLRDLMD (174 aa)). GTP contacts are provided by residues 346-353 (GMPNAGKS) and 393-397 (DIPGL).

This sequence belongs to the TRAFAC class OBG-HflX-like GTPase superfamily. OBG GTPase family.

The protein localises to the mitochondrion. In terms of biological role, may bind GTP and have GTPase activity. In Oryza sativa subsp. japonica (Rice), this protein is Probable GTP-binding protein OBGM, mitochondrial (OBGM).